Consider the following 241-residue polypeptide: MPKRTKLLPQQTFQVHQPRSLVSEGFTVKAMMKNSVVRGPPVAGAFKERPAKPTTFRKCYERGDFPIALEHDSKGNKIAWKVEIEKLDYHHYLPLFFDGLSEMTFPYEFFARRGIHDMLEHGGNKILPVIPQLIIPIKNALNLRNRQIICVTLKVLQHLVVSSEMVGEALLPYYRQILPILNIFKNMNVNSGDGIDYSQQKRENIGDLIQETLEAFERYGGEDAFINIKYMVPTYESCLLN.

As to quaternary structure, microtubule inner protein component of sperm flagellar doublet microtubules. Forms a large molecular chaperone complex containing heat shock proteins 70 and 90 and chaperonin components. Interacts with STIP1, PRKN, GPR37, HSPA8, TCP1/CCT1, CCT2, CCT3, CCT4, CCT5, CCT6A, CCT7 and CCT8. Interacts with MEIG1.

The protein localises to the cytoplasm. The protein resides in the cytoskeleton. Its subcellular location is the cilium axoneme. It localises to the flagellum axoneme. In terms of biological role, microtubule inner protein (MIP) part of the dynein-decorated doublet microtubules (DMTs) in cilia axoneme, which is required for motile cilia beating. Suppresses cell death induced by accumulation of unfolded Pael receptor (Pael-R, a substrate of Parkin). Facilitates the formation of inclusions consisting of Pael-R, molecular chaperones, protein degradation molecules and itself when proteasome is inhibited. May play an important role in the formation of Lewy bodies and protection of dopaminergic neurons against Parkinson disease. The protein is Parkin coregulated gene protein homolog (Pacrg) of Mus musculus (Mouse).